The primary structure comprises 650 residues: Laccase-like multicopper oxidase 1 (650 aa).

The N-terminal stretch at 1 to 20 (MLLSKLSILLAKWLSVAVYA) is a signal peptide. 3 Plastocyanin-like domains span residues 41–151 (QVPS…IVED), 162–360 (ERIL…LRYN), and 439–595 (KPVL…VVGD). A disulfide bridge links Cys-46 with Cys-254. Residues Asn-55 and Asn-83 are each glycosylated (N-linked (GlcNAc...) asparagine). Residues His-87, His-89, His-133, and His-135 each coordinate Cu cation. Cu cation-binding residues include His-501, His-504, His-506, His-576, Cys-577, His-578, and His-582. N-linked (GlcNAc...) asparagine glycosylation is present at Asn-620.

Belongs to the multicopper oxidase family. As to quaternary structure, monomer. N-glycosylation Asn-55 and Asn-83 is involved in folding, conformational stability and laccase activity.

It carries out the reaction 2 2',3,4-trihydroxy-trans-chalcone + O2 + 2 H(+) = 2 3',4'-dihydroxyaurone + 2 H2O. With respect to regulation, retains almost half of its activity in presence of high salt concentrations up to 100 mM NaCl. Retains also more than 85% of its original activity in the presence of 1 mM EDTA, indicating a satisfactory resistance towards chelators, which is rare among metal-containing enzyme. The activity drops significantly in the presence of NaN(3) or SDS. Appears more active in the presence of methanol compared to ethanol, but acetone or DMSO addition severely affect remaining laccase activity. In terms of biological role, yellow laccase-like multicopper oxidase that is able to oxidize a variety of phenolic compounds including standard laccase substrates such as 2'-azino-bis(3-ethylbenzothiazoline-6-sulphonic acid) (ABTS) and 2,6-dimethoxyphenol (2,6-DMP). The existence of an ortho-hydroxy group is crucial for oxidation since pyrogallol and catechol, which contain ortho-hydroxy groups, are readily oxidized, which is not the case for resorcinol and hydroquinone, that contain meta- and para-hydroxy groups, respectively. The same is also true for the existence of a methoxy group in an ortho-position, since 2,6-DMP, guaiacol and ferulic and caffeic acids are also rather easily oxidized compared with the corresponding unsubstituted compound. Can be used for the bioconversion of 2',3,4-trihy-droxychalcone to 3',4'-dihydroxy-aurone, a bioactive aurone recently shown to possess inhibitory activity against several isoforms of the histone deacetylase complex (HDAC). This is Laccase-like multicopper oxidase 1 from Thermothelomyces thermophilus (strain ATCC 42464 / BCRC 31852 / DSM 1799) (Sporotrichum thermophile).